A 711-amino-acid chain; its full sequence is DNA topoisomerase 3 (711 aa).

Positions 2-135 (KSLILAEKPS…IKRLWISSVT (134 aa)) constitute a Toprim domain. Positions 8 and 104 each coordinate Mg(2+). Residues 152-580 (YQNLYEAALA…EMKNFTFKVV (429 aa)) enclose the Topo IA-type catalytic domain. An interaction with DNA region spans residues 186–191 (SLGRVQ). Tyr305 acts as the O-(5'-phospho-DNA)-tyrosine intermediate in catalysis.

The protein belongs to the type IA topoisomerase family. Mg(2+) serves as cofactor.

It catalyses the reaction ATP-independent breakage of single-stranded DNA, followed by passage and rejoining.. Releases the supercoiling and torsional tension of DNA, which is introduced during the DNA replication and transcription, by transiently cleaving and rejoining one strand of the DNA duplex. Introduces a single-strand break via transesterification at a target site in duplex DNA. The scissile phosphodiester is attacked by the catalytic tyrosine of the enzyme, resulting in the formation of a DNA-(5'-phosphotyrosyl)-enzyme intermediate and the expulsion of a 3'-OH DNA strand. The free DNA strand then undergoes passage around the unbroken strand, thus removing DNA supercoils. Finally, in the religation step, the DNA 3'-OH attacks the covalent intermediate to expel the active-site tyrosine and restore the DNA phosphodiester backbone. In Staphylococcus epidermidis (strain ATCC 12228 / FDA PCI 1200), this protein is DNA topoisomerase 3.